Reading from the N-terminus, the 122-residue chain is Small ribosomal subunit protein uS13 (122 aa).

Positions 95–122 (GLPVRGQRTHTNARTRKGKAKPIAGKKK) are disordered.

Belongs to the universal ribosomal protein uS13 family. As to quaternary structure, part of the 30S ribosomal subunit. Forms a loose heterodimer with protein S19. Forms two bridges to the 50S subunit in the 70S ribosome.

Its function is as follows. Located at the top of the head of the 30S subunit, it contacts several helices of the 16S rRNA. In the 70S ribosome it contacts the 23S rRNA (bridge B1a) and protein L5 of the 50S subunit (bridge B1b), connecting the 2 subunits; these bridges are implicated in subunit movement. Contacts the tRNAs in the A and P-sites. This chain is Small ribosomal subunit protein uS13, found in Zymomonas mobilis subsp. mobilis (strain ATCC 31821 / ZM4 / CP4).